We begin with the raw amino-acid sequence, 611 residues long: Chaperone protein DnaK (611 aa).

At Thr173 the chain carries Phosphothreonine; by autocatalysis. 2 disordered regions span residues 525–548 (DNIS…ALEG) and 573–611 (YQQA…EDKK). Over residues 529-542 (EEDKSNAESKKDAL) the composition is skewed to basic and acidic residues. Residues 574-591 (QQAQQAQQQAQDGAQQTQ) show a composition bias toward low complexity. Residues 599 to 611 (AEFKEVNDDEDKK) show a composition bias toward basic and acidic residues.

This sequence belongs to the heat shock protein 70 family.

Acts as a chaperone. The polypeptide is Chaperone protein DnaK (Staphylococcus haemolyticus (strain JCSC1435)).